A 162-amino-acid polypeptide reads, in one-letter code: Probable tRNA (guanine(10)-N2)-dimethyltransferase (162 aa).

It belongs to the methyltransferase superfamily. Trm-G10 family. In terms of assembly, monomer.

The protein resides in the cytoplasm. It catalyses the reaction guanosine(10) in tRNA + 2 S-adenosyl-L-methionine = N(2)-dimethylguanosine(10) in tRNA + 2 S-adenosyl-L-homocysteine + 2 H(+). In terms of biological role, catalyzes the adenosylmethionine-dependent methylation of the exocyclic amino group (N(2)) of guanosine at position 10 of various tRNAs. Acts via a two-step process that leads to the formation of either N(2)-monomethyl (m(2)G) or N(2)-dimethylguanosine (m(2)(2)G). This chain is Probable tRNA (guanine(10)-N2)-dimethyltransferase (trmG10), found in Methanothermococcus thermolithotrophicus (Methanococcus thermolithotrophicus).